We begin with the raw amino-acid sequence, 1019 residues long: Alpha-mannosidase At3g26720 (1019 aa).

The first 22 residues, 1–22 (MAVKCFSLYLILAAIVIGGVTS), serve as a signal peptide directing secretion. Residues H47 and D49 each contribute to the Zn(2+) site. A glycan (N-linked (GlcNAc...) asparagine) is linked at N64. A Zn(2+)-binding site is contributed by D169. 2 N-linked (GlcNAc...) asparagine glycosylation sites follow: N278 and N336. H410 lines the Zn(2+) pocket. Residues C466 and C474 are joined by a disulfide bond. Residues N470, N638, N730, and N820 are each glycosylated (N-linked (GlcNAc...) asparagine). C824 and C829 are disulfide-bonded.

Belongs to the glycosyl hydrolase 38 family. Homodimer. The cofactor is Zn(2+).

The catalysed reaction is Hydrolysis of terminal, non-reducing alpha-D-mannose residues in alpha-D-mannosides.. Functionally, liberates mannose from p-nitrophenyl-alpha-D-mannoside in vitro. The protein is Alpha-mannosidase At3g26720 of Arabidopsis thaliana (Mouse-ear cress).